Reading from the N-terminus, the 183-residue chain is MESTINIENVVASTKLADEFDLVKIESELEGAEYNKEKFPGLVYRVKSPKAAFLIFTSGKVVCTGAKNVEDVRTVITNMARTLKSIGFDNINLEPEIHVQNIVASADLKTDLNLNAIALGLGLENIEYEPEQFPGLVYRIKQPKVVVLIFSSGKLVVTGGKSPEECEEGVRIVRQQLENLGLL.

A run of 2 repeats spans residues 7–83 (IENV…ARTL) and 99–177 (VQNI…RQQL).

It belongs to the TBP family.

Its function is as follows. General factor that plays a role in the activation of archaeal genes transcribed by RNA polymerase. Binds specifically to the TATA box promoter element which lies close to the position of transcription initiation. This chain is TATA-box-binding protein, found in Methanothrix thermoacetophila (strain DSM 6194 / JCM 14653 / NBRC 101360 / PT) (Methanosaeta thermophila).